Reading from the N-terminus, the 101-residue chain is Small ribosomal subunit protein bS18c (101 aa).

Residues 1-19 show a composition bias toward basic residues; that stretch reads MDKSKRLFRKSKRSFRRRL. The segment at 1–23 is disordered; sequence MDKSKRLFRKSKRSFRRRLPPIG.

This sequence belongs to the bacterial ribosomal protein bS18 family. In terms of assembly, part of the 30S ribosomal subunit.

Its subcellular location is the plastid. The protein localises to the chloroplast. The polypeptide is Small ribosomal subunit protein bS18c (Liriodendron tulipifera (Tuliptree)).